The chain runs to 274 residues: Lipoprotein E (274 aa).

A signal peptide spans 1-20 (MKTTLKMTALAALSAFVLAG). C21 carries the N-palmitoyl cysteine lipid modification. A lipid anchor (S-diacylglycerol cysteine) is attached at C21.

It localises to the cell outer membrane. The sequence is that of Lipoprotein E (hel) from Haemophilus influenzae (strain ATCC 51907 / DSM 11121 / KW20 / Rd).